The primary structure comprises 162 residues: 2-C-methyl-D-erythritol 2,4-cyclodiphosphate synthase (162 aa).

The a divalent metal cation site is built by aspartate 10 and histidine 12. Residues 10–12 and 36–37 contribute to the 4-CDP-2-C-methyl-D-erythritol 2-phosphate site; these read DVH and HS. Residue histidine 44 participates in a divalent metal cation binding. 4-CDP-2-C-methyl-D-erythritol 2-phosphate contacts are provided by residues 58–60, 63–67, and arginine 144; these read DIG and FSDTD.

Belongs to the IspF family. As to quaternary structure, homotrimer. Requires a divalent metal cation as cofactor.

The enzyme catalyses 4-CDP-2-C-methyl-D-erythritol 2-phosphate = 2-C-methyl-D-erythritol 2,4-cyclic diphosphate + CMP. It functions in the pathway isoprenoid biosynthesis; isopentenyl diphosphate biosynthesis via DXP pathway; isopentenyl diphosphate from 1-deoxy-D-xylulose 5-phosphate: step 4/6. Its function is as follows. Involved in the biosynthesis of isopentenyl diphosphate (IPP) and dimethylallyl diphosphate (DMAPP), two major building blocks of isoprenoid compounds. Catalyzes the conversion of 4-diphosphocytidyl-2-C-methyl-D-erythritol 2-phosphate (CDP-ME2P) to 2-C-methyl-D-erythritol 2,4-cyclodiphosphate (ME-CPP) with a corresponding release of cytidine 5-monophosphate (CMP). This is 2-C-methyl-D-erythritol 2,4-cyclodiphosphate synthase from Burkholderia mallei (strain NCTC 10247).